We begin with the raw amino-acid sequence, 388 residues long: GDP-4-keto-6-deoxy-D-mannose 3-dehydratase (388 aa).

26-29 (KMFT) provides a ligand contact to GDP-4-dehydro-alpha-D-rhamnose. The chain crosses the membrane as a helical span at residues 49 to 69 (YAVMVSSGSTANLLMIAALFF). Pyridoxal 5'-phosphate contacts are provided by residues 56–57 (GS), Trp88, Glu162, and Ser183. His188 (proton donor/acceptor) is an active-site residue. L-glutamate is bound at residue His215. Arg219 contributes to the GDP-4-dehydro-alpha-D-rhamnose binding site. Asn248 contacts pyridoxal 5'-phosphate. Residue Arg250 coordinates L-glutamate. Glu329 lines the GDP-4-dehydro-alpha-D-rhamnose pocket.

This sequence belongs to the DegT/DnrJ/EryC1 family. In terms of assembly, homodimer. It depends on pyridoxal 5'-phosphate as a cofactor.

The protein resides in the cell membrane. The enzyme catalyses GDP-4-dehydro-alpha-D-rhamnose + L-glutamate = GDP-4-dehydro-3,6-dideoxy-alpha-D-mannose + 2-oxoglutarate + NH4(+). The protein operates within nucleotide-sugar metabolism; GDP-L-colitose biosynthesis. Functionally, involved in the biosynthesis of L-colitose, a 3,6-dideoxyhexose present in the O-antigen region of lipopolysaccharides (LPS), where it serves as an antigenic determinant and is vital for bacterial defense and survival. Catalyzes the removal of the C3'-hydroxyl group from GDP-4-keto-6-deoxy-D-mannose via a combined transamination-deoxygenation reaction. The catalysis is initiated by a transamination step in which pyridoxal 5'-phosphate (PLP) is converted to pyridoxamine 5'-phosphate (PMP) in the presence of L-glutamate. This coenzyme then forms a Schiff base with GDP-4-keto-6-deoxy-D-mannose and the resulting adduct undergoes a PMP-mediated beta-dehydration reaction to give a sugar enamine intermediate, which after tautomerization and hydrolysis to release ammonia yields GDP-4-keto-3,6-dideoxy-D-mannose as a product. In vitro, is able to catalyze the formation of GDP-4-keto-3,6-dideoxymannose using GDP-perosamine rather than GDP-4-keto-6-deoxymannose as a substrate, with no need of glutamate. The sequence is that of GDP-4-keto-6-deoxy-D-mannose 3-dehydratase from Escherichia coli O55:H7 (strain CB9615 / EPEC).